We begin with the raw amino-acid sequence, 292 residues long: MNTESLALDFKSATLYAIRVVLHDADTTRLRAALDKRMADAGSFFENEPVVIDATRVDAPVDWPALLQALADHNLPPIGVVAEGANLQGARDAGLVPVELSTPVARAPQVIDTAPPNDVATPVPSVPEATAEAAAKAGPQDDEAYGEQADEAPAHNPESVPTRAARETTEANRPTATPPQSSSALVITKPLRSGQRVYARHTDLIVIGMVSQGAEVIADGNVHVYGPLRGKAMAGARGDTSARIFTTQLDAELLAVAGVYRVVEDKLDRALHNQPALVRLDGDTLRIEALKG.

The disordered stretch occupies residues 112–188; it reads DTAPPNDVAT…PQSSSALVIT (77 aa). Positions 128–137 are enriched in low complexity; sequence EATAEAAAKA. Residues 140–150 show a composition bias toward acidic residues; it reads QDDEAYGEQAD. A compositionally biased stretch (polar residues) spans 171–185; sequence ANRPTATPPQSSSAL.

Belongs to the MinC family. As to quaternary structure, interacts with MinD and FtsZ.

Functionally, cell division inhibitor that blocks the formation of polar Z ring septums. Rapidly oscillates between the poles of the cell to destabilize FtsZ filaments that have formed before they mature into polar Z rings. Prevents FtsZ polymerization. The chain is Probable septum site-determining protein MinC from Bordetella bronchiseptica (strain ATCC BAA-588 / NCTC 13252 / RB50) (Alcaligenes bronchisepticus).